The following is a 189-amino-acid chain: MTTTHGSTYEFRSARPGDAEAIEGLDGSFTTSTVFEVDVTGDGFALREVPADPPLVKVFPDDGGSDGEDGAEGEDADSRTFVAVGADGDLAGFAAVSYSAWNQRLTIEDIEVAPGHRGKGIGRVLMRHAADFARERGAGHLWLEVTNVNAPAIHAYRRMGFAFCGLDSALYQGTASEGEHALYMSMPCP.

The N-acetyltransferase domain maps to 44–189; it reads FALREVPADP…HALYMSMPCP (146 aa). The interval 55-76 is disordered; sequence LVKVFPDDGGSDGEDGAEGEDA. Residues 63–75 are compositionally biased toward acidic residues; that stretch reads GGSDGEDGAEGED.

It belongs to the acetyltransferase family. GNAT subfamily.

It carries out the reaction streptothricin F + acetyl-CoA = N(beta)-acetylstreptothricin F + CoA + H(+). In terms of biological role, involved in resistance to streptothricin, a broad-spectrum antibiotic produced by streptomycetes. Detoxifies streptothricin via acetylation of the beta amino group of the first beta-lysyl moiety of streptothricin. The protein is Streptothricin acetyltransferase of Streptomyces lavendulae.